We begin with the raw amino-acid sequence, 387 residues long: Carboxyaminopropylagmatine decarboxylase (387 aa).

Residue Lys52 is modified to N6-(pyridoxal phosphate)lysine.

This sequence belongs to the Orn/Lys/Arg decarboxylase class-II family. The cofactor is pyridoxal 5'-phosphate.

It catalyses the reaction N(1)-[(S)-3-amino-3-carboxypropyl]agmatine + H(+) = N(1)-(3-aminopropyl)agmatine + CO2. It functions in the pathway amine and polyamine biosynthesis; spermidine biosynthesis. In terms of biological role, decarboxylase involved in the biosynthesis of spermidine via the carboxyaminopropylagmatine (CAPA) pathway. Catalyzes the decarboxylation of CAPA to form aminopropylagmatine (APA). Can also decarboxylate carboxyspermidine and carboxynorspermidine, but not ornithine, arginine, lysine and meso-diaminopimelate. The protein is Carboxyaminopropylagmatine decarboxylase of Synechocystis sp. (strain ATCC 27184 / PCC 6803 / Kazusa).